Consider the following 1833-residue polypeptide: Protein TIC 214 (1833 aa).

6 helical membrane-spanning segments follow: residues Ile-18–Gly-38, Phe-67–Leu-87, Pro-90–His-110, Leu-127–Leu-147, Val-175–Ile-195, and Ile-218–Ile-238. Residues Glu-254–Lys-301 form a disordered region. Basic and acidic residues-rich tracts occupy residues Glu-259–Glu-273 and Asp-292–Lys-301.

Belongs to the TIC214 family. In terms of assembly, part of the Tic complex.

It is found in the plastid. Its subcellular location is the chloroplast inner membrane. In terms of biological role, involved in protein precursor import into chloroplasts. May be part of an intermediate translocation complex acting as a protein-conducting channel at the inner envelope. This Spinacia oleracea (Spinach) protein is Protein TIC 214.